A 146-amino-acid chain; its full sequence is MRLHDLRPVPGSRQKPTRKGQGIGSGLGKTAGRGQKGQKARSGGGVRPGFEGGQMPLYRRLPKRGFHNKFAKEIIAINVDRLNKFEDGTVVTPELLLETGIIKKIGDGVKILGGGELKKALTVKAHAFSESAKEKITAAGGQAEVL.

The interval 1 to 56 (MRLHDLRPVPGSRQKPTRKGQGIGSGLGKTAGRGQKGQKARSGGGVRPGFEGGQMP) is disordered. 2 stretches are compositionally biased toward gly residues: residues 21–35 (QGIG…GRGQ) and 42–52 (SGGGVRPGFEG).

This sequence belongs to the universal ribosomal protein uL15 family. As to quaternary structure, part of the 50S ribosomal subunit.

Functionally, binds to the 23S rRNA. This is Large ribosomal subunit protein uL15 from Carboxydothermus hydrogenoformans (strain ATCC BAA-161 / DSM 6008 / Z-2901).